A 134-amino-acid chain; its full sequence is DNA-directed RNA polymerase subunit omega (134 aa).

It belongs to the RNA polymerase subunit omega family. In terms of assembly, the RNAP catalytic core consists of 2 alpha, 1 beta, 1 beta' and 1 omega subunit. When a sigma factor is associated with the core the holoenzyme is formed, which can initiate transcription.

The enzyme catalyses RNA(n) + a ribonucleoside 5'-triphosphate = RNA(n+1) + diphosphate. Functionally, promotes RNA polymerase assembly. Latches the N- and C-terminal regions of the beta' subunit thereby facilitating its interaction with the beta and alpha subunits. The polypeptide is DNA-directed RNA polymerase subunit omega (Rhizobium etli (strain CIAT 652)).